The sequence spans 180 residues: Small ribosomal subunit protein bS16 (180 aa).

The protein belongs to the bacterial ribosomal protein bS16 family.

The polypeptide is Small ribosomal subunit protein bS16 (Flavobacterium psychrophilum (strain ATCC 49511 / DSM 21280 / CIP 103535 / JIP02/86)).